Here is a 351-residue protein sequence, read N- to C-terminus: MTAAISFDNARSPDNALPLPAASTARVGVLLVNLGTPDTADAAGVRVYLKEFLSDRRVIEDQGLLWKIILNGIILNVRPRKKAKDYQSIWNTEKNESPLKTITRAQSEKLSAALADRSHVIVDWAMRYGNPSIKAGVDGLMAKGCDRILVVPLYPQYSAATSATVCDEAFRVLTELRAQPTLRVTPPYYNDDFYIEALAVSIEEHLKTLSYKPELIVASFHGMPKEYVDKGDPYREQCVATTELLRKRLGMDDTKLLLTFQSRFGFSEWLQPYTDKTIEKLAKDGVKRIAVVMPGFAADCLETLEEISGENCEIFKHNGGEEFSAVPCLNDSAPGMEVLRQLVLRELQGWL.

Residues histidine 221 and glutamate 302 each contribute to the Fe cation site.

Belongs to the ferrochelatase family.

It localises to the cytoplasm. The catalysed reaction is heme b + 2 H(+) = protoporphyrin IX + Fe(2+). Its pathway is porphyrin-containing compound metabolism; protoheme biosynthesis; protoheme from protoporphyrin-IX: step 1/1. Its function is as follows. Catalyzes the ferrous insertion into protoporphyrin IX. The chain is Ferrochelatase from Bradyrhizobium sp. (strain BTAi1 / ATCC BAA-1182).